Here is a 321-residue protein sequence, read N- to C-terminus: Methionyl-tRNA formyltransferase (321 aa).

Residue 111–114 coordinates (6S)-5,6,7,8-tetrahydrofolate; the sequence is SLLP.

Belongs to the Fmt family.

It carries out the reaction L-methionyl-tRNA(fMet) + (6R)-10-formyltetrahydrofolate = N-formyl-L-methionyl-tRNA(fMet) + (6S)-5,6,7,8-tetrahydrofolate + H(+). In terms of biological role, attaches a formyl group to the free amino group of methionyl-tRNA(fMet). The formyl group appears to play a dual role in the initiator identity of N-formylmethionyl-tRNA by promoting its recognition by IF2 and preventing the misappropriation of this tRNA by the elongation apparatus. This chain is Methionyl-tRNA formyltransferase, found in Bifidobacterium animalis subsp. lactis (strain AD011).